We begin with the raw amino-acid sequence, 969 residues long: Translation initiation factor IF-2 (969 aa).

Positions 49–63 are enriched in basic and acidic residues; the sequence is HLRKSHGATDGDKRK. Disordered stretches follow at residues 49 to 85, 100 to 128, and 143 to 380; these read HLRK…KART, DDVS…REEE, and LRER…SFQA. Positions 105 to 114 are enriched in low complexity; the sequence is VAEQGQAQVA. Residues 143-181 show a composition bias toward basic and acidic residues; the sequence is LRERQERLEREEAERRAREEAAEAERRRAEEEAAAKRAA. The segment covering 182–206 has biased composition (low complexity); sequence AEAAAAQQAAQQAAAAQQAAAPADS. Residues 209–260 show a composition bias toward basic and acidic residues; the sequence is DEARAAAERAAQREAAKKAEDAAREAAEKARAEQEEIRKRREAAEAEARAIR. The segment covering 301–323 has biased composition (low complexity); the sequence is AQARPAAKKPAAAPAATPAPAGA. Gly residues predominate over residues 353–366; it reads SSGGVDRGWRGGPK. One can recognise a tr-type G domain in the interval 469-638; sequence PRPPVVTVMG…LLQAEVLELK (170 aa). The tract at residues 478–485 is G1; the sequence is GHVDHGKT. A GTP-binding site is contributed by 478-485; that stretch reads GHVDHGKT. The segment at 503 to 507 is G2; sequence GITQH. A G3 region spans residues 524 to 527; that stretch reads DTPG. Residues 524 to 528 and 578 to 581 contribute to the GTP site; these read DTPGH and NKID. Positions 578-581 are G4; the sequence is NKID. Residues 614–616 are G5; that stretch reads SAK.

Belongs to the TRAFAC class translation factor GTPase superfamily. Classic translation factor GTPase family. IF-2 subfamily.

It is found in the cytoplasm. Functionally, one of the essential components for the initiation of protein synthesis. Protects formylmethionyl-tRNA from spontaneous hydrolysis and promotes its binding to the 30S ribosomal subunits. Also involved in the hydrolysis of GTP during the formation of the 70S ribosomal complex. This chain is Translation initiation factor IF-2, found in Burkholderia multivorans (strain ATCC 17616 / 249).